The sequence spans 362 residues: Cobalt-precorrin-5B C(1)-methyltransferase (362 aa).

Belongs to the CbiD family.

The enzyme catalyses Co-precorrin-5B + S-adenosyl-L-methionine = Co-precorrin-6A + S-adenosyl-L-homocysteine. Its pathway is cofactor biosynthesis; adenosylcobalamin biosynthesis; cob(II)yrinate a,c-diamide from sirohydrochlorin (anaerobic route): step 6/10. In terms of biological role, catalyzes the methylation of C-1 in cobalt-precorrin-5B to form cobalt-precorrin-6A. The chain is Cobalt-precorrin-5B C(1)-methyltransferase from Burkholderia cenocepacia (strain ATCC BAA-245 / DSM 16553 / LMG 16656 / NCTC 13227 / J2315 / CF5610) (Burkholderia cepacia (strain J2315)).